Consider the following 80-residue polypeptide: Acyl carrier protein (80 aa).

One can recognise a Carrier domain in the interval 4–79; the sequence is ANVEQKVKNI…DAVNYITTHK (76 aa). An O-(pantetheine 4'-phosphoryl)serine modification is found at Ser-39.

The protein belongs to the acyl carrier protein (ACP) family. In terms of processing, 4'-phosphopantetheine is transferred from CoA to a specific serine of apo-ACP by AcpS. This modification is essential for activity because fatty acids are bound in thioester linkage to the sulfhydryl of the prosthetic group.

The protein localises to the cytoplasm. The protein operates within lipid metabolism; fatty acid biosynthesis. Its function is as follows. Carrier of the growing fatty acid chain in fatty acid biosynthesis. This is Acyl carrier protein from Anaeromyxobacter sp. (strain Fw109-5).